Here is a 373-residue protein sequence, read N- to C-terminus: ATP phosphoribosyltransferase regulatory subunit (373 aa).

This sequence belongs to the class-II aminoacyl-tRNA synthetase family. HisZ subfamily. As to quaternary structure, heteromultimer composed of HisG and HisZ subunits.

The protein resides in the cytoplasm. It participates in amino-acid biosynthesis; L-histidine biosynthesis; L-histidine from 5-phospho-alpha-D-ribose 1-diphosphate: step 1/9. In terms of biological role, required for the first step of histidine biosynthesis. May allow the feedback regulation of ATP phosphoribosyltransferase activity by histidine. The chain is ATP phosphoribosyltransferase regulatory subunit from Rhizobium leguminosarum bv. trifolii (strain WSM2304).